Here is a 697-residue protein sequence, read N- to C-terminus: SPX domain-containing membrane protein OsI_08463 (697 aa).

The 144-residue stretch at 2–145 (VNFGKRLMAD…GYKFTDYYVS (144 aa)) folds into the SPX domain. 11 consecutive transmembrane segments (helical) span residues 247-267 (FMSLLLNLANTFLYMVNTYII), 278-298 (LGAAATVCGVIIGSMAVAQVF), 315-335 (LVFSSIMLFLGNLLYALAYDV), 338-356 (LTVLIVGRLLCGLGSARAV), 375-395 (AGFVSASALGMACGPALAGLL), 411-431 (LPGWIMCLAWITYLFWLWISF), 513-533 (LLIYFMLKFAMEILLSESSVV), 544-564 (TVAMFLAVLGLTVLPVNVIVG), 576-596 (ILVASEIMVLIGIAMSFRFTS), 604-624 (VSSALITFVFAEVLEGVNLSL), and 670-690 (LLNVTLLPSFVICVASIVATF).

This sequence belongs to the major facilitator superfamily.

It is found in the membrane. This chain is SPX domain-containing membrane protein OsI_08463, found in Oryza sativa subsp. indica (Rice).